The chain runs to 338 residues: RNA 3'-terminal phosphate cyclase (338 aa).

Residues glutamine 103 and 283–287 contribute to the ATP site; that span reads YLADQ. Residue histidine 308 is the Tele-AMP-histidine intermediate of the active site.

This sequence belongs to the RNA 3'-terminal cyclase family. Type 1 subfamily.

Its subcellular location is the cytoplasm. It carries out the reaction a 3'-end 3'-phospho-ribonucleotide-RNA + ATP = a 3'-end 2',3'-cyclophospho-ribonucleotide-RNA + AMP + diphosphate. In terms of biological role, catalyzes the conversion of 3'-phosphate to a 2',3'-cyclic phosphodiester at the end of RNA. The mechanism of action of the enzyme occurs in 3 steps: (A) adenylation of the enzyme by ATP; (B) transfer of adenylate to an RNA-N3'P to produce RNA-N3'PP5'A; (C) and attack of the adjacent 2'-hydroxyl on the 3'-phosphorus in the diester linkage to produce the cyclic end product. The biological role of this enzyme is unknown but it is likely to function in some aspects of cellular RNA processing. The polypeptide is RNA 3'-terminal phosphate cyclase (Shigella boydii serotype 4 (strain Sb227)).